We begin with the raw amino-acid sequence, 279 residues long: tRNA uridine(34) hydroxylase (279 aa).

Positions 126–221 (TKPGMHVIDT…YLQSVKGADS (96 aa)) constitute a Rhodanese domain. The active-site Cysteine persulfide intermediate is the cysteine 181.

The protein belongs to the TrhO family.

The enzyme catalyses uridine(34) in tRNA + AH2 + O2 = 5-hydroxyuridine(34) in tRNA + A + H2O. Catalyzes oxygen-dependent 5-hydroxyuridine (ho5U) modification at position 34 in tRNAs. The polypeptide is tRNA uridine(34) hydroxylase (Anaplasma phagocytophilum (strain HZ)).